The sequence spans 181 residues: Ribosome-recycling factor (181 aa).

The tract at residues Met-135–Thr-160 is disordered.

This sequence belongs to the RRF family.

The protein resides in the cytoplasm. Its function is as follows. Responsible for the release of ribosomes from messenger RNA at the termination of protein biosynthesis. May increase the efficiency of translation by recycling ribosomes from one round of translation to another. This Leuconostoc mesenteroides subsp. mesenteroides (strain ATCC 8293 / DSM 20343 / BCRC 11652 / CCM 1803 / JCM 6124 / NCDO 523 / NBRC 100496 / NCIMB 8023 / NCTC 12954 / NRRL B-1118 / 37Y) protein is Ribosome-recycling factor.